Consider the following 439-residue polypeptide: MRLSRYFMPTLREAPSDAQIVSHQLMLRAGMIRQEAAGIYAWLPLGLKVLKKIEQVVREEMDRAGAIEVLMPTLQLADLWRESGRYDDYGEEMLRIKDRHERDLLYGPTAEEVITDIFRAYIKSYKDLPKNLYNIQWKFRDERRPRFGVMRGREFLMKDAYSFDIDEAAARRAYNRMFCAYLNVYARLGLKAIPVRADTGPIGGDLSHEFIILADTGESQVFAHRDLVEMGAPGPDIDWDGDLEPLVQQRTRLYAASDEMHDQARFETEAPEDKRMTARGIEVGHIFYFGEKYSRPMNAKVAGPDGAERFVHMGSYGVGVSRLVGAIIEASHDEAGIVWPDSVAPFGAAVVNLRPGEAAVDAVAEQAYGALQAAGKEPLLDDRDERPGAKFASLDLVGVPWQLIVGPKGVAEGVVEIKRRATGERQTLPLDAALKAITA.

It belongs to the class-II aminoacyl-tRNA synthetase family. ProS type 2 subfamily. As to quaternary structure, homodimer.

It localises to the cytoplasm. It carries out the reaction tRNA(Pro) + L-proline + ATP = L-prolyl-tRNA(Pro) + AMP + diphosphate. Catalyzes the attachment of proline to tRNA(Pro) in a two-step reaction: proline is first activated by ATP to form Pro-AMP and then transferred to the acceptor end of tRNA(Pro). This Phenylobacterium zucineum (strain HLK1) protein is Proline--tRNA ligase.